Consider the following 90-residue polypeptide: Sec-independent protein translocase protein TatA (90 aa).

A helical transmembrane segment spans residues 1 to 21 (MGISPWTLLIVLLIVLLVFGT). 2 stretches are compositionally biased toward basic and acidic residues: residues 42-59 (MKEGEEGAKEGEKSEPSK) and 70-90 (SGEGHTIEGERSEQPRDRHSS). The segment at 42–90 (MKEGEEGAKEGEKSEPSKLEQPPEEEKESGEGHTIEGERSEQPRDRHSS) is disordered.

This sequence belongs to the TatA/E family. As to quaternary structure, the Tat system comprises two distinct complexes: a TatABC complex, containing multiple copies of TatA, TatB and TatC subunits, and a separate TatA complex, containing only TatA subunits. Substrates initially bind to the TatABC complex, which probably triggers association of the separate TatA complex to form the active translocon.

The protein resides in the cell inner membrane. Functionally, part of the twin-arginine translocation (Tat) system that transports large folded proteins containing a characteristic twin-arginine motif in their signal peptide across membranes. TatA could form the protein-conducting channel of the Tat system. The polypeptide is Sec-independent protein translocase protein TatA (Alkalilimnicola ehrlichii (strain ATCC BAA-1101 / DSM 17681 / MLHE-1)).